Consider the following 389-residue polypeptide: Lipopolysaccharide assembly protein B (389 aa).

The helical transmembrane segment at 1–20 (MLELLFLLLPVAAAYGWYMG) threads the bilayer. The Cytoplasmic segment spans residues 21–389 (RRSAQQNKQD…IKPIRGLDGL (369 aa)). TPR repeat units lie at residues 35 to 68 (LSRD…DTGT), 69 to 102 (VEAH…ASLT), 107 to 140 (LLAI…TDFR), 142 to 174 (GALQ…GKDK), 180 to 213 (AHFY…DKNS), 214 to 247 (ARVS…DREL), and 249 to 282 (SETL…NTGA). Residues Cys-357, Cys-360, Cys-371, and Cys-374 each coordinate Fe cation.

It belongs to the LapB family.

It localises to the cell inner membrane. Modulates cellular lipopolysaccharide (LPS) levels by regulating LpxC, which is involved in lipid A biosynthesis. May act by modulating the proteolytic activity of FtsH towards LpxC. May also coordinate assembly of proteins involved in LPS synthesis at the plasma membrane. The sequence is that of Lipopolysaccharide assembly protein B from Escherichia coli O157:H7.